A 275-amino-acid chain; its full sequence is Large ribosomal subunit protein uL2c (275 aa).

Positions 28 to 53 (TPTKSLTHANHRARGRNHSGSITTRW) are disordered.

This sequence belongs to the universal ribosomal protein uL2 family. As to quaternary structure, part of the 50S ribosomal subunit.

The protein localises to the plastid. It is found in the chloroplast. The polypeptide is Large ribosomal subunit protein uL2c (rpl2) (Nephroselmis olivacea (Green alga)).